The primary structure comprises 213 residues: MRSGVIAQKVGMTRVYNDAGEHIPVTVLRLDNVQVVAQRTEDKNGYTAVQLGAGQSKVKNTTKALRGHFAAANVEPKAKLVEFRVSPENLIDIGATLTANHFQSGQLVDVTGTTIGKGFAGAMKRHNFGGGRASHGNSVSHRAHGSTGNNQDPGRVWKGKRMAGHMGQTRVTTQNLEVVSTDEDRGLILVKGAVPGSKGSWIIVRDAVKSAAK.

The interval 131–155 (GRASHGNSVSHRAHGSTGNNQDPGR) is disordered. Polar residues predominate over residues 135 to 152 (HGNSVSHRAHGSTGNNQD). At Q151 the chain carries N5-methylglutamine.

The protein belongs to the universal ribosomal protein uL3 family. In terms of assembly, part of the 50S ribosomal subunit. Forms a cluster with proteins L14 and L19. Post-translationally, methylated by PrmB.

One of the primary rRNA binding proteins, it binds directly near the 3'-end of the 23S rRNA, where it nucleates assembly of the 50S subunit. The protein is Large ribosomal subunit protein uL3 of Agrobacterium fabrum (strain C58 / ATCC 33970) (Agrobacterium tumefaciens (strain C58)).